We begin with the raw amino-acid sequence, 329 residues long: Mas-related G-protein coupled receptor member X2 (329 aa).

At 1–33 (MDPTTPAWGTESTTMNGNDQALPLLCGKETMIS) the chain is on the extracellular side. The helical transmembrane segment at 34 to 54 (VFLILFIALVGLVGNAFVLWL) threads the bilayer. Over 55–63 (LGFRMRRNA) the chain is Cytoplasmic. Residues 64–84 (FSVYVLSLAGADFLFLCFQMT) form a helical membrane-spanning segment. Topologically, residues 85 to 96 (SCLAYLINFFGS) are extracellular. The helical transmembrane segment at 97 to 116 (ISINIPSFFTVMTCAYLAGL) threads the bilayer. Residues 117 to 143 (SMLSAISTERCLSVLWPIWYRCRRPRH) lie on the Cytoplasmic side of the membrane. Residues 144–164 (LSAVMCVLLWALSLLLSILEG) traverse the membrane as a helical segment. Residues 165 to 183 (KFCGFLFSDDDPGWCQTFD) are Extracellular-facing. Residues 184–204 (FITAAWLMFLFVVLCGSSLAL) traverse the membrane as a helical segment. At 205–227 (LVRILCGSRSLPLTRLYLTILLT) the chain is on the cytoplasmic side. Residues 228-248 (VLIFLLCGLPFGIQWFLILWI) form a helical membrane-spanning segment. Topologically, residues 249–263 (WKNSVVLFCHIHPIS) are extracellular. The chain crosses the membrane as a helical span at residues 264–284 (VVLSSFNSSANPIIYFFVGSF). Residues 285 to 329 (RKQWRLRQPILKLALQRALQDTAEVDHSEGCFSQGTLEMSRSSLV) lie on the Cytoplasmic side of the membrane.

Belongs to the G-protein coupled receptor 1 family. Mas subfamily.

Its subcellular location is the cell membrane. Its function is as follows. Mast cell-specific receptor for basic secretagogues, i.e. cationic amphiphilic drugs, as well as endo- or exogenous peptides, consisting of a basic head group and a hydrophobic core. Recognizes and binds small molecules containing a cyclized tetrahydroisoquinoline (THIQ), such as non-steroidal neuromuscular blocking drugs (NMBDs), including tubocurarine and atracurium. In response to these compounds, mediates pseudo-allergic reactions characterized by histamine release, inflammation and airway contraction. This is Mas-related G-protein coupled receptor member X2 (MRGPRX2) from Macaca mulatta (Rhesus macaque).